A 1158-amino-acid polypeptide reads, in one-letter code: ATP-dependent helicase/deoxyribonuclease subunit B (1158 aa).

An ATP-binding site is contributed by 8-15; the sequence is GRAGTGKS. [4Fe-4S] cluster-binding residues include Cys791, Cys1112, Cys1115, and Cys1121.

This sequence belongs to the helicase family. AddB/RexB type 1 subfamily. Heterodimer of AddA and AddB. Mg(2+) is required as a cofactor. The cofactor is [4Fe-4S] cluster.

Functionally, the heterodimer acts as both an ATP-dependent DNA helicase and an ATP-dependent, dual-direction single-stranded exonuclease. Recognizes the chi site generating a DNA molecule suitable for the initiation of homologous recombination. The AddB subunit has 5' -&gt; 3' nuclease activity but not helicase activity. The polypeptide is ATP-dependent helicase/deoxyribonuclease subunit B (Clostridium perfringens (strain SM101 / Type A)).